Reading from the N-terminus, the 918-residue chain is MATASPRSDTSDIHSGRLQLKVTVSSAKLKRKKNWFGTAIYTEVIVDGEVKKTAKSSSSSNPKWDEQLIVNVTPQTTLEFRVWSHHTLKADALLGKATVDLKQVLLTHNRKLEKVKEQLKLSLENKNGIVQTGELTVVLDGLVIEQEPVTNRSSSPPIEIQQNGDALHENGDPATRTTPRLPVEGTIGIDNHVSTNTVVPNSCCSHVVNGENTPSSPSQVAARPKNAPAPKPVTSAPTSDTVNGESSSVLADNTSTMGTLLPSEDTTSTSNCTSTTTQEPPVQEPPASSEHSECIPSASAEVGPEARSLIDPDSDSRNNSVFDKVRQPEGCVEPLRPQSGNTNTEALPSGWEQRKDPHGRTYYVDHNTRTTTWERPQPLPPGWERRVDDRGRVYYVDHNTRTTTWQRPTMESVRNFEQWQSQRNQLQGAMQQFNQRYLYSASMLAAENDPYGPLPPGWEKRVDSTDRVYFVNHNTKTTQWEDPRTQGLPNEEPLPEGWEIRYTREGVRYFVDHNTRTTTFKDPRNGKSSVTKGGPQIAYERSFRWKLAHFRYLCQSNALPSHVKINVSRQTLFEDSFQQIMALKPYDLRRRLYVIFRGEEGLDYGGLAREWFFLLSHEVLNPMYCLFEYAGKNNYCLQINPASTINPDHLSYFCFIGRFIAMALFHGKFIDTGFSLPFYKRMLSKKLTIKDLESIDTEFYNSLIWIRDNNIEECGLEMYFSVDMEILGKVTSHDLKLGGSNILVTEENKDEYIGLMTEWRFSRGVQEQTKAFLDGFNEVVPLQWLQYFDEKELEVMLCGMQEVDLADWQRNTVYRHYTRNSKQIIWFWQFVKETDNEVRMRLLQFVTGTCRLPLGGFAELMGSNGPQKFCIEKVGKDTWLPRSHTCFNRLDLPPYKSYEQLKEKLLFAIEETEGFGQE.

The C2 domain occupies 1–116 (MATASPRSDT…THNRKLEKVK (116 aa)). Polar residues-rich tracts occupy residues 150-164 (TNRS…QQNG), 209-219 (NGENTPSSPSQ), and 235-258 (SAPT…STMG). Disordered stretches follow at residues 150 to 182 (TNRS…PRLP) and 209 to 360 (NGEN…PHGR). Residues 266–281 (TTSTSNCTSTTTQEPP) show a composition bias toward low complexity. WW domains lie at 345–378 (EALP…RPQP), 377–410 (QPLP…RPTM), 452–485 (GPLP…DPRT), and 492–525 (EPLP…DPRN). Residues 345–525 (EALPSGWEQR…RTTTFKDPRN (181 aa)) are interaction with ERBB4. Residues 345–527 (EALPSGWEQR…TTFKDPRNGK (183 aa)) are required for interaction with and ubiquitination of AMOTL2. Required for interaction with YAP1. An HECT domain is found at 584–918 (KPYDLRRRLY…IEETEGFGQE (335 aa)). Cys886 functions as the Glycyl thioester intermediate in the catalytic mechanism.

Interacts with the Crumbs complex components PALS1 and PATJ; interaction with the Crumbs complex is enhanced by WWP1's interaction with AMOTL2 and facilitates WWP1 localization to the plasma membrane. Interaction with the Crumbs complex promotes WWP1 monoubiquitination of AMOTL2, which activates the Hippo signaling pathway. Binds SCNN1A, SCNN1B, SCNN1G, WBP1, WBP2, DRPLA and adenovirus type 2 PIII. Interacts with TGIF. Binds KLF2 AND HIVEP3. Interacts with RNF11. Interacts with SPART. Interacts with NDFIP1 and NDFIP2; this interaction activates the E3 ubiquitin-protein ligase. Interacts with ERBB4 isoforms JM-B CYT-1 and JM-A CYT-1. Does not interact with ERB4 isoform JMA-A CYT-2. Interacts with SMAD1, SMAD2, SMAD3, SMAD5, SMAD6, SMAD7, TGFBR1 and TGFBR2. Associates with the TGFBR1:TGFBR2 receptor complex in presence of SMAD7. Interacts with SKIL isoform 1. Interacts with TP63 isoform 1 and isoform 2. Interacts (via WW domains) with ARRDC1, ARRDC2 and ARRDC3. Auto-ubiquitinated and ubiquitinated by RNF11.

It is found in the cytoplasm. Its subcellular location is the cell membrane. The protein localises to the nucleus. It localises to the cell junction. The catalysed reaction is S-ubiquitinyl-[E2 ubiquitin-conjugating enzyme]-L-cysteine + [acceptor protein]-L-lysine = [E2 ubiquitin-conjugating enzyme]-L-cysteine + N(6)-ubiquitinyl-[acceptor protein]-L-lysine.. The protein operates within protein modification; protein ubiquitination. With respect to regulation, activated by NDFIP1- and NDFIP2-binding. Functionally, E3 ubiquitin-protein ligase which accepts ubiquitin from an E2 ubiquitin-conjugating enzyme in the form of a thioester and then directly transfers the ubiquitin to targeted substrates. Ubiquitinates and promotes degradation of SMAD2 in response to TGF-beta signaling, which requires interaction with TGIF. Ubiquitinates ERBB4 isoforms JM-A CYT-1 and JM-B CYT-1, KLF2, KLF5 and TP63 and promotes their proteasomal degradation. Ubiquitinates RNF11 without targeting it for degradation. Ubiquitinates and promotes degradation of TGFBR1; the ubiquitination is enhanced by SMAD7. Ubiquitinates SMAD6 and SMAD7. Activates the Hippo signaling pathway in response to cell contact inhibition and recruitment to the Crumbs complex at the cell membrane. Monoubiquitinates AMOTL2 which facilitates its interaction with and activation of LATS2. LATS2 then phosphorylates YAP1, excluding it from the nucleus and therefore ultimately represses YAP1-driven transcription of target genes. In Mus musculus (Mouse), this protein is NEDD4-like E3 ubiquitin-protein ligase WWP1 (Wwp1).